Reading from the N-terminus, the 346-residue chain is Histone PARylation factor 1 (346 aa).

The residue at position 1 (M1) is an N-acetylmethionine. N6-acetyllysine is present on residues K19, K186, and K233. Position 235 is a polyADP-ribosyl aspartic acid (D235). Y238 is modified (ADP-ribosyltyrosine). E240 carries the post-translational modification PolyADP-ribosyl glutamic acid. Residues 242 to 346 (PETDADLKRI…SEENIDQLAG (105 aa)) are interaction with PARP1. E284 functions as the Proton donor in the catalytic mechanism.

Belongs to the HPF1 family. Interacts with PARP1 (via the PARP catalytic domain). Interacts with PARP2 (via the PARP catalytic domain). Interacts with core nucleosomes in a PARP1- and PARP2-dependent manner.

The protein localises to the chromosome. The protein resides in the nucleus. In terms of biological role, cofactor for serine ADP-ribosylation that confers serine specificity on PARP1 and PARP2 and plays a key role in DNA damage response. Initiates the repair of double-strand DNA breaks: recruited to DNA damage sites by PARP1 and PARP2 and switches the amino acid specificity of PARP1 and PARP2 from aspartate or glutamate to serine residues, licensing serine ADP-ribosylation of target proteins. Serine ADP-ribosylation of target proteins, such as histones, promotes decompaction of chromatin and the recruitment of repair factors leading to the reparation of DNA strand breaks. Serine ADP-ribosylation of proteins constitutes the primary form of ADP-ribosylation of proteins in response to DNA damage. HPF1 acts by completing the active site of PARP1 and PARP2: forms a composite active site composed of residues from HPF1 and PARP1 or PARP2. While HPF1 promotes the initiation of serine ADP-ribosylation, it restricts the polymerase activity of PARP1 and PARP2 in order to limit the length of poly-ADP-ribose chains. HPF1 also promotes tyrosine ADP-ribosylation, probably by conferring tyrosine specificity on PARP1. This chain is Histone PARylation factor 1, found in Mus musculus (Mouse).